A 43-amino-acid polypeptide reads, in one-letter code: Subtilosin-A (43 aa).

A propeptide spanning residues 1-8 (MKKAVIVE) is cleaved from the precursor. The segment at residues 9-43 (NKGCATCSIGAACLVDGPIPDFEIAGATGLFGLWG) is a cross-link (cyclopeptide (Asn-Gly)). The 2-cysteinyl-D-phenylalanine (Cys-Phe) cross-link spans 12 to 39 (CATCSIGAACLVDGPIPDFEIAGATGLF). Residues 15–36 (CSIGAACLVDGPIPDFEIAGAT) constitute a cross-link (2-cysteinyl-D-allo-threonine (Cys-Thr)). Residues 21 to 30 (CLVDGPIPDF) constitute a cross-link (2-cysteinyl-L-phenylalanine (Cys-Phe)).

This sequence belongs to the bacteriocin class V family. This sactipeptide undergoes unique processing steps that include proteolytic cleavage after Glu-8, and covalent linkage of the alpha-amino of Asn-9 with the carboxyl of Gly-43 to form a cyclopeptide. Thioether cross-links are formed between cysteines and the alpha-carbons of other amino acids, Cys-12 to Phe-39, Cys-15 to Thr-36, and Cys-21 to Phe-30. In forming these cross-links, Thr-36 and Phe-39 are converted to D-amino acids. Propeptide cleavage and cyclopeptide formation only occur after all 3 thioether cross-links are formed.

It localises to the secreted. Has bacteriocidal activity against some Gram-positive bacteria such as Listeria, some species of Bacillus and E.faecium. A single mutation (Thr-14-Ile) confers hemolytic activity against rabbit and human blood. This is Subtilosin-A (sboA) from Bacillus subtilis (strain 168).